Consider the following 141-residue polypeptide: Putative antiporter subunit mnhB2 (141 aa).

Helical transmembrane passes span 10-30 (TVTK…FLAG), 35-55 (GGGF…FLAF), 70-90 (ILMI…MFFG), and 116-136 (VFEA…MLSI).

This sequence belongs to the CPA3 antiporters (TC 2.A.63) subunit B family. May form a heterooligomeric complex that consists of seven subunits: mnhA2, mnhB2, mnhC2, mnhD2, mnhE2, mnhF2 and mnhG2.

The protein localises to the cell membrane. The sequence is that of Putative antiporter subunit mnhB2 (mnhB2) from Staphylococcus saprophyticus subsp. saprophyticus (strain ATCC 15305 / DSM 20229 / NCIMB 8711 / NCTC 7292 / S-41).